Consider the following 513-residue polypeptide: MAAFKLDFLPEMMVDHCSLNSSPVSKKMNGTLDHPDQPDLDAIKMFVGQVPRTWSEKDLRELFEQYGAVYEINVLRDRSQNPPQSKGCCFVTFYTRKAALEAQNALHNMKVLPGMHHPIQMKPADSEKNNAVEDRKLFIGMISKKCTENDIRVMFSSFGQIEECRILWGPDGLSRGCALVTFTTRAMAQTAIKAMHQAQTMEGCSSPMVVKFADTQKDKEQKRMAQQLQQQMQQISAASVWGNLAGLNTLGPQYLALYLQLLQQTASSGNLNTLSSLHPMGGLNAMQLQNLAALAAAASAAQNTPSGTNALTTSSSPLSVLTSSGSSPSSSSSNSVNPIASLGALQTLAGATAGLNVGSLAGMAALNGGLGSSGLSNGTGSTMEALTQAYSGIQQYAAAALPTLYNQNLLTQQSIGAAGSQKEGPEGANLFIYHLPQEFGDQDLLQMFMPFGNVVSAKVFIDKQTNLSKCFGFVSYDNPVSAQAAIQSMNGFQIGMKRLKVQLKRSKNDSKPY.

Threonine 31 is subject to Phosphothreonine. RRM domains lie at 43–126 (IKMF…PADS) and 135–215 (RKLF…FADT). Lysine 136 is covalently cross-linked (Glycyl lysine isopeptide (Lys-Gly) (interchain with G-Cter in SUMO2)). Residues serine 206 and serine 329 each carry the phosphoserine modification. A disordered region spans residues 304–336 (TPSGTNALTTSSSPLSVLTSSGSSPSSSSSNSV). Low complexity predominate over residues 311 to 336 (LTTSSSPLSVLTSSGSSPSSSSSNSV). In terms of domain architecture, RRM 3 spans 428–506 (ANLFIYHLPQ…KRLKVQLKRS (79 aa)).

It belongs to the CELF/BRUNOL family. In terms of assembly, associates with polysomes. Interacts with HNRNPH1; the interaction in RNA-dependent. Interacts with PARN. Component of an EIF2 complex at least composed of CELF1/CUGBP1, CALR, CALR3, EIF2S1, EIF2S2, HSP90B1 and HSPA5.

It is found in the nucleus. Its subcellular location is the cytoplasm. Its function is as follows. RNA-binding protein implicated in the regulation of several post-transcriptional events. Involved in pre-mRNA alternative splicing, mRNA translation and stability. Mediates exon inclusion and/or exclusion in pre-mRNA that are subject to tissue-specific and developmentally regulated alternative splicing. Specifically activates exon 5 inclusion of cardiac isoforms of TNNT2 during heart remodeling at the juvenile to adult transition. Acts both as an activator and as a repressor of a pair of coregulated exons: promotes inclusion of the smooth muscle (SM) exon but exclusion of the non-muscle (NM) exon in actinin pre-mRNAs. Activates SM exon 5 inclusion by antagonizing the repressive effect of PTB. Promotes exclusion of exon 11 of the INSR pre-mRNA. Inhibits, together with HNRNPH1, insulin receptor (IR) pre-mRNA exon 11 inclusion in myoblast. Increases translation and controls the choice of translation initiation codon of CEBPB mRNA. Increases mRNA translation of CEBPB in aging liver. Increases translation of CDKN1A mRNA by antagonizing the repressive effect of CALR3. Mediates rapid cytoplasmic mRNA deadenylation. Recruits the deadenylase PARN to the poly(A) tail of EDEN-containing mRNAs to promote their deadenylation. Required for completion of spermatogenesis. Binds to (CUG)n triplet repeats in the 3'-UTR of transcripts such as DMPK and to Bruno response elements (BREs). Binds to muscle-specific splicing enhancer (MSE) intronic sites flanking the alternative exon 5 of TNNT2 pre-mRNA. Binds to AU-rich sequences (AREs or EDEN-like) localized in the 3'-UTR of JUN and FOS mRNAs. Binds to the IR RNA. Binds to the 5'-region of CDKN1A and CEBPB mRNAs. Binds with the 5'-region of CEBPB mRNA in aging liver. May be a specific regulator of miRNA biogenesis. Binds to primary microRNA pri-MIR140 and, with CELF2, negatively regulates the processing to mature miRNA. In Pongo abelii (Sumatran orangutan), this protein is CUGBP Elav-like family member 1 (CELF1).